We begin with the raw amino-acid sequence, 475 residues long: Citrate synthase, mitochondrial (475 aa).

Catalysis depends on residues His-310, His-356, and Asp-411.

Belongs to the citrate synthase family.

The protein resides in the mitochondrion matrix. The enzyme catalyses oxaloacetate + acetyl-CoA + H2O = citrate + CoA + H(+). It participates in carbohydrate metabolism; tricarboxylic acid cycle; isocitrate from oxaloacetate: step 1/2. This Aspergillus niger protein is Citrate synthase, mitochondrial (cit-1).